Reading from the N-terminus, the 262-residue chain is Rhomboid-type serine protease 2 (262 aa).

The Cytoplasmic portion of the chain corresponds to 1-16 (MNWKSYVFPGGHPPAA). The helical transmembrane segment at 17-37 (LTTGLVVFLTAIYLLSFIFAL) threads the bilayer. The Lumenal portion of the chain corresponds to 38 to 57 (REDLSLAPESLFKLQMSRLS). Residues 58–78 (LYPLIHLSLPHLLFNVLAIWA) form a helical membrane-spanning segment. Over 79 to 89 (PLNLFEETHGT) the chain is Cytoplasmic. A helical membrane pass occupies residues 90 to 110 (VYTGVFLNLSALFAGILYCLL). Topologically, residues 111–112 (GK) are lumenal. A helical membrane pass occupies residues 113 to 133 (LLYPEALVAGASGWCFTLFAY). Ser124 (nucleophile) is an active-site residue. Residues 134-151 (YSFKESQIRPRTRIFRTD) lie on the Cytoplasmic side of the membrane. A helical transmembrane segment spans residues 152–168 (YSIPTLYTPLVLLVAIA). Topologically, residues 169-174 (VVIPGS) are lumenal. Residues 175–191 (SFWGHFFGLCVGYAIGY) form a helical membrane-spanning segment. His179 is an active-site residue. Topologically, residues 192–262 (KESWFNKITP…DNSGTVLGTA (71 aa)) are cytoplasmic. Residues 243 to 262 (STETPLPLHNDNSGTVLGTA) form a disordered region. Polar residues predominate over residues 252–262 (NDNSGTVLGTA).

This sequence belongs to the peptidase S54 family. In terms of assembly, interacts with SNX3.

The protein localises to the golgi apparatus membrane. It localises to the golgi apparatus. Its subcellular location is the cis-Golgi network membrane. The enzyme catalyses Cleaves type-1 transmembrane domains using a catalytic dyad composed of serine and histidine that are contributed by different transmembrane domains.. Probable rhomboid-type serine protease that catalyzes intramembrane proteolysis. The protein is Rhomboid-type serine protease 2 (RBD2) of Saccharomyces cerevisiae (strain ATCC 204508 / S288c) (Baker's yeast).